The following is a 513-amino-acid chain: Pantetheinase (513 aa).

Positions 1-21 (MTTQLPAYVAILLFYVSRASC) are cleaved as a signal peptide. An N-linked (GlcNAc...) asparagine glycan is attached at Asn-38. The region spanning 39-306 (ATLTPVSREE…GKLLLSQLDS (268 aa)) is the CN hydrolase domain. The active-site Proton acceptor is the Glu-79. Asn-130 carries an N-linked (GlcNAc...) asparagine glycan. The active-site Proton donor is Lys-178. N-linked (GlcNAc...) asparagine glycosylation is present at Asn-200. Catalysis depends on Cys-211, which acts as the Nucleophile. Residues Asn-283, Asn-315, and Asn-353 are each glycosylated (N-linked (GlcNAc...) asparagine). Gly-491 is lipidated: GPI-anchor amidated glycine. The propeptide at 492–513 (LTAQARIIMLIVIAPIVCSLSW) is removed in mature form.

The protein belongs to the carbon-nitrogen hydrolase superfamily. BTD/VNN family. Monomer. In terms of tissue distribution, widely expressed with higher expression in spleen, kidney and blood. Overexpressed in lesional psoriatic skin.

Its subcellular location is the cell membrane. The catalysed reaction is (R)-pantetheine + H2O = cysteamine + (R)-pantothenate. Its function is as follows. Amidohydrolase that hydrolyzes specifically one of the carboamide linkages in D-pantetheine thus recycling pantothenic acid (vitamin B5) and releasing cysteamine. This chain is Pantetheinase (VNN1), found in Homo sapiens (Human).